We begin with the raw amino-acid sequence, 425 residues long: Septin-7 (425 aa).

Residues 28 to 297 enclose the Septin-type G domain; sequence RGFEFTLMVV…ENYRSRKLAA (270 aa). Positions 38 to 45 are G1 motif; the sequence is GESGLGKS. GTP-binding positions include 38–45, Thr71, Gly97, 176–184, Gly231, and Arg246; these read GESGLGKS and KADTLTPEE. Residues 94-97 are G3 motif; sequence DTPG. Positions 175–178 are G4 motif; sequence AKAD. The stretch at 324 to 421 forms a coiled coil; sequence LAQMEEERRE…SRTLEKNKKK (98 aa).

This sequence belongs to the TRAFAC class TrmE-Era-EngA-EngB-Septin-like GTPase superfamily. Septin GTPase family. As to quaternary structure, monomer, and homodimer. Nucleotide binding promotes oligomerization. Can form heterooligomers with other family members and form filaments.

The protein resides in the cytoplasm. The protein localises to the chromosome. Its subcellular location is the centromere. It is found in the kinetochore. It localises to the cytoskeleton. The protein resides in the spindle. The protein localises to the cleavage furrow. Its subcellular location is the midbody. It is found in the cilium axoneme. Filament-forming cytoskeletal GTPase. Required for normal organization of the actin cytoskeleton. Required for normal progress through mitosis. Involved in cytokinesis. Plays a role in ciliogenesis and collective cell movements including convergent extension during gastrulation. Controls cell elongation but not polarization during convergent extension. The chain is Septin-7 from Xenopus laevis (African clawed frog).